An 83-amino-acid chain; its full sequence is Alpha-neurotoxin NTX-4 (83 aa).

The signal sequence occupies residues 1-21 (MKTLLLTLLVVTIVCLDLGYT). 4 disulfides stabilise this stretch: cysteine 24-cysteine 45, cysteine 38-cysteine 62, cysteine 64-cysteine 75, and cysteine 76-cysteine 81.

Belongs to the three-finger toxin family. Short-chain subfamily. Type I alpha-neurotoxin sub-subfamily. As to expression, expressed by the venom gland.

It is found in the secreted. Functionally, binds to muscle nicotinic acetylcholine receptor (nAChR) and inhibit acetylcholine from binding to the receptor, thereby impairing neuromuscular transmission. This chain is Alpha-neurotoxin NTX-4, found in Naja sputatrix (Malayan spitting cobra).